Reading from the N-terminus, the 360-residue chain is MEERERGARSAGAGSPARPPSPRLDVSSDSFDPLLALYAPRLPPIPYPNAPCFNNVAEYESFLRTGVRGGGRGRGRARGAAAGSGVPAAPGPSGRTRRRPDAPAPDPERIQRLRRLMVAKEEGDGAAGAGRRGPGRSRKAPRNVLTRMPLHEGSPLGELHRCIREGVKVNVHIRTFKGLRGVCTGFLVAFDKFWNMALTDVDETYRKPVLGKAYERDSSLTLTRLFDRLKLQDSSKKEADSKSAVEDSTLSRYSQTSTWKLASVWGRADTGRGSHKRSRSVPSSLQASAREESRSELSGRTTRTDGSSVGGTFSRATTLSRGQSRKKKRKPKVDYQQVFTRHINQIFIRGENVLLVHLAQ.

Positions 1–29 (MEERERGARSAGAGSPARPPSPRLDVSSD) are disordered. Phosphoserine is present on residues Ser15 and Ser21. Omega-N-methylarginine is present on Arg41. A disordered region spans residues 68–143 (RGGGRGRGRA…PGRSRKAPRN (76 aa)). Over residues 78-94 (RGAAAGSGVPAAPGPSG) the composition is skewed to low complexity. Residue Lys120 forms a Glycyl lysine isopeptide (Lys-Gly) (interchain with G-Cter in SUMO2) linkage. Phosphoserine is present on Ser154. One can recognise a Sm domain in the interval 154 to 229 (SPLGELHRCI…LTLTRLFDRL (76 aa)). Positions 171-204 (VHIRTFKGLRGVCTGFLVAFDKFWNMALTDVDET) are SM 1. Residues 268–333 (ADTGRGSHKR…SRKKKRKPKV (66 aa)) are disordered. Position 280 is a phosphoserine (Ser280). Residues 299 to 322 (GRTTRTDGSSVGGTFSRATTLSRG) are compositionally biased toward polar residues. The interval 343-356 (INQIFIRGENVLLV) is SM 2.

It belongs to the snRNP Sm proteins family. Component of the heptameric ring U7 snRNP complex, or U7 Sm protein core complex, at least composed of LSM10, LSM11, SNRPB, SNRPD3, SNRPE, SNRPF, SNRPG and U7 snRNA. Formation of the U7 snRNP is an ATP-dependent process mediated by a specialized SMN complex containing at least the Sm protein core complex and additionally, the U7-specific LSM10 and LSM11 proteins. Identified in a histone pre-mRNA complex, at least composed of ERI1, LSM11, SLBP, SNRPB, SYNCRIP and YBX1. Interacts (via the Sm domains) with CLNS1A. Interacts with SMN and ZNF473. Interacts with PRMT5 and WDR77.

The protein localises to the nucleus. Its function is as follows. Component of the U7 snRNP complex that is involved in the histone 3'-end pre-mRNA processing. Increases U7 snRNA levels but not histone 3'-end pre-mRNA processing activity, when overexpressed. Required for cell cycle progression from G1 to S phases. Binds specifically to the Sm-binding site of U7 snRNA. This is U7 snRNA-associated Sm-like protein LSm11 from Homo sapiens (Human).